The following is a 264-amino-acid chain: Heavy metal-associated isoprenylated plant protein 17 (264 aa).

HMA domains are found at residues 32–95 (VTDA…KKIE) and 133–204 (IMEV…KERQ). Positions 185-218 (SRKLNKKMHQKIKKAEKERQEWESEMMLREAEEE) form a coiled coil. C261 carries the cysteine methyl ester modification. C261 is lipidated: S-farnesyl cysteine. A propeptide spans 262 to 264 (SIS) (removed in mature form).

It belongs to the HIPP family.

In terms of biological role, probable heavy-metal-binding protein. The sequence is that of Heavy metal-associated isoprenylated plant protein 17 from Arabidopsis thaliana (Mouse-ear cress).